Here is a 653-residue protein sequence, read N- to C-terminus: Macrolide export ATP-binding/permease protein MacB (653 aa).

An ABC transporter domain is found at 6–244 (LQLTRVTRRF…DAAPDASGGA (239 aa)). Position 42–49 (42–49 (GASGSGKS)) interacts with ATP. Transmembrane regions (helical) follow at residues 278–298 (LLTM…VAIG), 526–546 (LTLL…IGVM), 587–607 (MGGA…SLFV), and 616–636 (AASI…FGFM).

This sequence belongs to the ABC transporter superfamily. Macrolide exporter (TC 3.A.1.122) family. As to quaternary structure, homodimer.

It is found in the cell inner membrane. In terms of biological role, non-canonical ABC transporter that contains transmembrane domains (TMD), which form a pore in the inner membrane, and an ATP-binding domain (NBD), which is responsible for energy generation. Confers resistance against macrolides. The chain is Macrolide export ATP-binding/permease protein MacB from Burkholderia pseudomallei (strain 1710b).